A 289-amino-acid polypeptide reads, in one-letter code: UPF0761 membrane protein ESA_04062 (289 aa).

Helical transmembrane passes span 44–64 (LLSLVPFVAVIFALFAAFPMF), 104–124 (VGALGLIVTSLLLMYAIDSAL), 140–160 (FAVYWMILTLGPLLAGASLVI), 183–203 (IFPLLLSWLSFWLLYSVVPTT), 215–235 (LVAALLFELGKKGFALYITMF), and 244–264 (VLAVIPILFLWVYWTWCIVLL).

It belongs to the UPF0761 family.

It is found in the cell inner membrane. The sequence is that of UPF0761 membrane protein ESA_04062 from Cronobacter sakazakii (strain ATCC BAA-894) (Enterobacter sakazakii).